Consider the following 139-residue polypeptide: Hydrogenase maturation factor HypA (139 aa).

A Ni(2+)-binding site is contributed by histidine 2. Positions 73, 76, 110, and 113 each coordinate Zn(2+).

This sequence belongs to the HypA/HybF family.

In terms of biological role, involved in the maturation of [NiFe] hydrogenases. Required for nickel insertion into the metal center of the hydrogenase. The polypeptide is Hydrogenase maturation factor HypA (Thermococcus gammatolerans (strain DSM 15229 / JCM 11827 / EJ3)).